Consider the following 219-residue polypeptide: Probable nicotinate-nucleotide adenylyltransferase (219 aa).

This sequence belongs to the NadD family.

The catalysed reaction is nicotinate beta-D-ribonucleotide + ATP + H(+) = deamido-NAD(+) + diphosphate. It participates in cofactor biosynthesis; NAD(+) biosynthesis; deamido-NAD(+) from nicotinate D-ribonucleotide: step 1/1. Functionally, catalyzes the reversible adenylation of nicotinate mononucleotide (NaMN) to nicotinic acid adenine dinucleotide (NaAD). This chain is Probable nicotinate-nucleotide adenylyltransferase, found in Pseudomonas putida (strain W619).